Reading from the N-terminus, the 431-residue chain is Lipoyl synthase 2, mitochondrial (431 aa).

Positions 21 to 43 (SPLGKLQEERGEGVAKDPKKDKQ) are disordered. Residues 26–40 (LQEERGEGVAKDPKK) show a composition bias toward basic and acidic residues. 7 residues coordinate [4Fe-4S] cluster: cysteine 127, cysteine 132, cysteine 138, cysteine 159, cysteine 163, cysteine 166, and serine 375. Positions 142-364 (DEEEGTATAT…EEEAMAMGFL (223 aa)) constitute a Radical SAM core domain.

The protein belongs to the radical SAM superfamily. Lipoyl synthase family. It depends on [4Fe-4S] cluster as a cofactor.

The protein localises to the mitochondrion. The catalysed reaction is [[Fe-S] cluster scaffold protein carrying a second [4Fe-4S](2+) cluster] + N(6)-octanoyl-L-lysyl-[protein] + 2 oxidized [2Fe-2S]-[ferredoxin] + 2 S-adenosyl-L-methionine + 4 H(+) = [[Fe-S] cluster scaffold protein] + N(6)-[(R)-dihydrolipoyl]-L-lysyl-[protein] + 4 Fe(3+) + 2 hydrogen sulfide + 2 5'-deoxyadenosine + 2 L-methionine + 2 reduced [2Fe-2S]-[ferredoxin]. It participates in protein modification; protein lipoylation via endogenous pathway; protein N(6)-(lipoyl)lysine from octanoyl-[acyl-carrier-protein]: step 2/2. Its function is as follows. Catalyzes the radical-mediated insertion of two sulfur atoms into the C-6 and C-8 positions of the octanoyl moiety bound to the lipoyl domains of lipoate-dependent enzymes, thereby converting the octanoylated domains into lipoylated derivatives. The protein is Lipoyl synthase 2, mitochondrial of Trypanosoma cruzi (strain CL Brener).